Here is a 107-residue protein sequence, read N- to C-terminus: Neuroparsin-A (107 aa).

The N-terminal stretch at 1–22 (MKATAALVAATLLLAVTLFHRA) is a signal peptide. Residues 23–24 (ER) constitute a propeptide that is removed on maturation.

In terms of assembly, homodimer; disulfide-linked.

In terms of biological role, neurosparins are multifunctional neurohormones: they inhibit the effects of juvenile hormone, stimulate fluid reabsorption of isolated recta and induces an increase in hemolymph lipid and trehalose levels. This Locusta migratoria (Migratory locust) protein is Neuroparsin-A.